The following is a 430-amino-acid chain: Hydrogenobyrinate a,c-diamide synthase (430 aa).

Residues Arg239 to Leu422 form the GATase cobBQ-type domain. Cys321 serves as the catalytic Nucleophile.

This sequence belongs to the CobB/CbiA family. It depends on Mg(2+) as a cofactor.

It catalyses the reaction hydrogenobyrinate + 2 L-glutamine + 2 ATP + 2 H2O = hydrogenobyrinate a,c-diamide + 2 L-glutamate + 2 ADP + 2 phosphate + 2 H(+). The protein operates within cofactor biosynthesis; adenosylcobalamin biosynthesis; cob(II)yrinate a,c-diamide from precorrin-2 (aerobic route): step 9/10. In terms of biological role, catalyzes the ATP-dependent amidation of the two carboxylate groups at positions a and c of hydrogenobyrinate, using either L-glutamine or ammonia as the nitrogen source. This is Hydrogenobyrinate a,c-diamide synthase from Stutzerimonas stutzeri (strain A1501) (Pseudomonas stutzeri).